The chain runs to 782 residues: MNKKHTLISLAILTALYSQQSLADLHEQCLMGVPKFSGEVVTGDVNSLPVYIEADNAEINQPNDATYQGNVDLKQGNRHLLAQSVQVKQSGNQSTPLRMAYVRNGFDYKDNQINMLGKDAEFNLDSHDGNLTNSEYEFVGRQGRGKADNITLHNNYRVMKNATFTSCLHGDNAWAVDASEIRQYVKEEYAEMWHARFKIHGVPVFYTPYLQLPIGDRRRSGLLIPSAGTSNRDGLWYAQPIYWNIAPNYDLTFTPKYMSRRGWQANGEFRYLTSIGEGKVAGEYLGKDRYSEYASDNRKRHLFYWNHNSSFLQNWRLNINYTRVSDKRYFNDFDSIYGRSTDGYANQYARIAYYQPNYNFSLSAHQFQIFDDIVNIGPYRAVPQLDFNYHKYDLANGWLNFKLHSQAVRFDNDSKLMPTAWRFHAEPSLNSLMSNKYGSLNIETKLYATRYEQKKGSGKNAEDVQKTVNRVIPQFKVDLQSVLSRDITFLKEYTQTFEPHVQYLYRPYRNQSNIGSTLNNDYLGFGYDSALVQQDYYSLFRDRRYSGLDRISSANQVTLGGTTRFYDIAGEERFNLSAGQIYYLSNSRIDENPANKTPTSSSAWALESNWKISNKWYWRGSYQFDTHTNSTSLANTSLEYNPEKNNLIQLNYRYVNQEYIDQNLGKSANAYQQDIQQVGLVVGWEIANNWAVVGRYYQDLALQKPVEQYLGVQYNSCCWAASVGVKRNVTNHQNQTRNEIVYDNSIGITLELRGLGSNDHQSGIQEMLEKGKLPYIRAFSLD.

Residues 1 to 23 (MNKKHTLISLAILTALYSQQSLA) form the signal peptide.

This sequence belongs to the LptD family. Component of the lipopolysaccharide transport and assembly complex. Interacts with LptE and LptA.

The protein localises to the cell outer membrane. Together with LptE, is involved in the assembly of lipopolysaccharide (LPS) at the surface of the outer membrane. In Haemophilus influenzae (strain 86-028NP), this protein is LPS-assembly protein LptD.